The sequence spans 248 residues: Pulmonary surfactant-associated protein A (248 aa).

The signal sequence occupies residues 1 to 17; it reads MLLCSLTLMLLWMVASG. The Collagen-like domain maps to 28–100; that stretch reads GSPGIPGTPG…PGERGPPGFP (73 aa). The segment at 29 to 103 is disordered; that stretch reads SPGIPGTPGS…RGPPGFPAYL (75 aa). A compositionally biased stretch (basic and acidic residues) spans 42–51; the sequence is PGRDGRDGIK. Pro residues predominate over residues 54–65; it reads PGPPGPMGPPGG. The span at 69–82 shows a compositional bias: low complexity; that stretch reads LPGRDGMTGAPGLP. Residues 84-93 show a composition bias toward basic and acidic residues; that stretch reads ERGEKGEPGE. The 121-residue stretch at 127–247 folds into the C-type lectin domain; that stretch reads LQGSMLEVGE…CLQYRLAICE (121 aa). 2 cysteine pairs are disulfide-bonded: Cys155–Cys246 and Cys224–Cys238. Asn207 carries an N-linked (GlcNAc...) asparagine glycan. Ca(2+)-binding residues include Glu215, Arg217, Asn234, and Asp235.

The protein belongs to the SFTPA family. As to quaternary structure, oligomeric complex of 6 set of homotrimers.

It localises to the secreted. The protein resides in the extracellular space. It is found in the extracellular matrix. Its subcellular location is the surface film. Its function is as follows. In presence of calcium ions, it binds to surfactant phospholipids and contributes to lower the surface tension at the air-liquid interface in the alveoli of the mammalian lung and is essential for normal respiration. Enhances the expression of MYO18A/SP-R210 on alveolar macrophages. In Ovis aries (Sheep), this protein is Pulmonary surfactant-associated protein A (SFTPA1).